The following is a 455-amino-acid chain: Succinyl-CoA--L-malate CoA-transferase alpha subunit (455 aa).

The segment at 1-58 (MAKASRLTRSTGQPTEVSEGQVTGTSEMPPTGEEPSGHAESKPPASDPMSTPGTGQEQ) is disordered. Composition is skewed to polar residues over residues 7–28 (LTRS…TSEM) and 48–58 (PMSTPGTGQEQ). Residue aspartate 227 is the Nucleophile of the active site.

It belongs to the CoA-transferase III family. As to quaternary structure, forms a large complex composed of six heterodimers (alpha, beta).

It catalyses the reaction succinyl-CoA + (S)-malate = (S)-malyl-CoA + succinate. The enzyme catalyses (3S)-citramalate + succinyl-CoA = (3S)-citramalyl-CoA + succinate. Its function is as follows. Involved in the 3-hydroxypropionate cycle used for autotrophic carbon dioxide fixation. Catalyzes the transfer of CoA moiety from succinyl-CoA to L-malate to yield L-malyl-CoA. In Chloroflexus aurantiacus (strain ATCC 29366 / DSM 635 / J-10-fl), this protein is Succinyl-CoA--L-malate CoA-transferase alpha subunit (smtA).